Consider the following 786-residue polypeptide: Endonuclease MutS2 (786 aa).

Residue 335–342 participates in ATP binding; that stretch reads GPNTGGKT. Residues 711-786 enclose the Smr domain; it reads LDLRGERFEN…GLGVTVVELK (76 aa).

Belongs to the DNA mismatch repair MutS family. MutS2 subfamily. In terms of assembly, homodimer. Binds to stalled ribosomes, contacting rRNA.

Functionally, endonuclease that is involved in the suppression of homologous recombination and thus may have a key role in the control of bacterial genetic diversity. Acts as a ribosome collision sensor, splitting the ribosome into its 2 subunits. Detects stalled/collided 70S ribosomes which it binds and splits by an ATP-hydrolysis driven conformational change. Acts upstream of the ribosome quality control system (RQC), a ribosome-associated complex that mediates the extraction of incompletely synthesized nascent chains from stalled ribosomes and their subsequent degradation. Probably generates substrates for RQC. The polypeptide is Endonuclease MutS2 (Bacillus anthracis (strain A0248)).